Here is a 150-residue protein sequence, read N- to C-terminus: UPF0178 protein Bcen2424_1660 (150 aa).

It belongs to the UPF0178 family.

The protein is UPF0178 protein Bcen2424_1660 of Burkholderia cenocepacia (strain HI2424).